Consider the following 426-residue polypeptide: Tryptophan--tRNA ligase (426 aa).

The 'HIGH' region signature appears at 66-74 (PSGEMHLGN). Residues 314–318 (KMSSS) carry the 'KMSKS' region motif.

The protein belongs to the class-I aminoacyl-tRNA synthetase family.

Its subcellular location is the cytoplasm. The catalysed reaction is tRNA(Trp) + L-tryptophan + ATP = L-tryptophyl-tRNA(Trp) + AMP + diphosphate + H(+). This is Tryptophan--tRNA ligase from Thermoplasma volcanium (strain ATCC 51530 / DSM 4299 / JCM 9571 / NBRC 15438 / GSS1).